A 498-amino-acid chain; its full sequence is Pentatricopeptide repeat-containing protein At2g15980 (498 aa).

7 PPR repeats span residues 244–274 (NATT…MEEE), 280–314 (NVYS…GVVY), 315–349 (DIVA…GIEC), 350–384 (TCLT…GFEA), 385–423 (DGLT…MFYP), 424–458 (SRNC…GFKP), and 459–489 (SQET…MAES).

The protein belongs to the PPR family. P subfamily.

In Arabidopsis thaliana (Mouse-ear cress), this protein is Pentatricopeptide repeat-containing protein At2g15980.